The sequence spans 469 residues: 3-isopropylmalate dehydratase large subunit (469 aa).

[4Fe-4S] cluster-binding residues include cysteine 347, cysteine 408, and cysteine 411.

Belongs to the aconitase/IPM isomerase family. LeuC type 1 subfamily. In terms of assembly, heterodimer of LeuC and LeuD. [4Fe-4S] cluster serves as cofactor.

It catalyses the reaction (2R,3S)-3-isopropylmalate = (2S)-2-isopropylmalate. It participates in amino-acid biosynthesis; L-leucine biosynthesis; L-leucine from 3-methyl-2-oxobutanoate: step 2/4. Its function is as follows. Catalyzes the isomerization between 2-isopropylmalate and 3-isopropylmalate, via the formation of 2-isopropylmaleate. The chain is 3-isopropylmalate dehydratase large subunit from Haemophilus influenzae (strain PittEE).